Here is a 543-residue protein sequence, read N- to C-terminus: Zinc finger protein 852 (543 aa).

One can recognise a KRAB domain in the interval 8–82 (VAYEDLSEDY…TSGGLFGVVP (75 aa)). Ser145 is modified (phosphoserine). 12 consecutive C2H2-type zinc fingers follow at residues 159 to 181 (YRCDECGKAFYWSSHLIGHRRIH), 187 to 209 (YECNECGKTFRQTSQLIVHLRTH), 215 to 237 (YECSECGKAYRHSSHLIQHQRLH), 243 to 265 (YKCNECAKAFNQSSKLFDHQRTH), 271 to 293 (YECKECGAAFSRSKNLVRHQFLH), 299 to 321 (YKCNECGRAFCSNRNLIDHQRTH), 327 to 349 (YKCNECGKAFSRSKCLIRHQSLH), 355 to 377 (YKCSECGKAFNQISQLVEHERIH), 383 to 405 (FKCSECGKAFGLSKCLIRHQRLH), 411 to 433 (YKCNECGKSFNQNSYLIIHQRIH), 439 to 461 (YECNECGKVFSYNSSLMVHQRTH), and 467 to 489 (YKCNSCGKAFSDSSQLTVHQRVH).

It belongs to the krueppel C2H2-type zinc-finger protein family.

It is found in the nucleus. May be involved in transcriptional regulation. The polypeptide is Zinc finger protein 852 (ZNF852) (Homo sapiens (Human)).